We begin with the raw amino-acid sequence, 67 residues long: ATP synthase F(0) complex subunit 8 (67 aa).

The helical transmembrane segment at 8-24 (TWLIMILSMILTLFITF) threads the bilayer. N6-acetyllysine; alternate is present on Lys54. Position 54 is an N6-succinyllysine; alternate (Lys54). Position 57 is an N6-acetyllysine (Lys57).

The protein belongs to the ATPase protein 8 family. Component of the ATP synthase complex composed at least of ATP5F1A/subunit alpha, ATP5F1B/subunit beta, ATP5MC1/subunit c (homooctomer), MT-ATP6/subunit a, MT-ATP8/subunit 8, ATP5ME/subunit e, ATP5MF/subunit f, ATP5MG/subunit g, ATP5MK/subunit k, ATP5MJ/subunit j, ATP5F1C/subunit gamma, ATP5F1D/subunit delta, ATP5F1E/subunit epsilon, ATP5PF/subunit F6, ATP5PB/subunit b, ATP5PD/subunit d, ATP5PO/subunit OSCP. ATP synthase complex consists of a soluble F(1) head domain (subunits alpha(3) and beta(3)) - the catalytic core - and a membrane F(0) domain - the membrane proton channel (subunits c, a, 8, e, f, g, k and j). These two domains are linked by a central stalk (subunits gamma, delta, and epsilon) rotating inside the F1 region and a stationary peripheral stalk (subunits F6, b, d, and OSCP). Interacts with PRICKLE3.

It is found in the mitochondrion membrane. In terms of biological role, subunit 8, of the mitochondrial membrane ATP synthase complex (F(1)F(0) ATP synthase or Complex V) that produces ATP from ADP in the presence of a proton gradient across the membrane which is generated by electron transport complexes of the respiratory chain. ATP synthase complex consist of a soluble F(1) head domain - the catalytic core - and a membrane F(1) domain - the membrane proton channel. These two domains are linked by a central stalk rotating inside the F(1) region and a stationary peripheral stalk. During catalysis, ATP synthesis in the catalytic domain of F(1) is coupled via a rotary mechanism of the central stalk subunits to proton translocation. In vivo, can only synthesize ATP although its ATP hydrolase activity can be activated artificially in vitro. Part of the complex F(0) domain. The sequence is that of ATP synthase F(0) complex subunit 8 from Phoca vitulina (Harbor seal).